The sequence spans 409 residues: Astacin-like metalloendopeptidase (409 aa).

Positions 1 to 19 (MDLKMLLIFTAFLLPAVLG) are cleaved as a signal peptide. Positions 20–86 (FPIQDNYENS…EGDIVPRRSR (67 aa)) are excised as a propeptide. Positions 30 to 42 (TATSESTQVTTEE) are enriched in low complexity. Residues 30-55 (TATSESTQVTTEESIYDSPSPTETDS) are disordered. The Peptidase M12A domain maps to 87-285 (SAFNCRNCYW…AKINKLYNCS (199 aa)). 5 disulfides stabilise this stretch: C91/C94, C134/C284, C155/C175, C287/C313, and C339/C362. H183 is a binding site for Zn(2+). E184 is an active-site residue. The Zn(2+) site is built by H187 and H193. A CUB domain is found at 287 to 399 (CSTIIDAAFG…SGFQATFTSA (113 aa)).

It depends on Zn(2+) as a cofactor.

Its subcellular location is the cytoplasm. It is found in the cell membrane. It localises to the cytoplasmic vesicle. The protein localises to the secretory vesicle. The protein resides in the cortical granule. Probable oocyte-specific oolemmal receptor involved in sperm and egg adhesion and fertilization. Protease which may play a role in the breaking down of the vitelline membrane (days 0-5) and possibly, in the digestion of the egg white (days 9-12). The polypeptide is Astacin-like metalloendopeptidase (Coturnix japonica (Japanese quail)).